Consider the following 391-residue polypeptide: Heme A synthase (391 aa).

The next 8 membrane-spanning stretches (helical) occupy residues 37–57, 121–141, 152–172, 186–206, 229–249, 298–318, 332–352, and 354–374; these read IRLW…VGGL, RQLG…FLAA, LLAL…MVAS, LATH…QALL, TTVL…VAGI, FLHR…WIFG, LLAM…LSAA, and WQVA…ILHA. H300 contacts heme. Position 360 (H360) interacts with heme.

The protein belongs to the COX15/CtaA family. Type 2 subfamily. As to quaternary structure, interacts with CtaB. Requires heme b as cofactor.

It is found in the cell membrane. The enzyme catalyses Fe(II)-heme o + 2 A + H2O = Fe(II)-heme a + 2 AH2. It functions in the pathway porphyrin-containing compound metabolism; heme A biosynthesis; heme A from heme O: step 1/1. Its function is as follows. Catalyzes the conversion of heme O to heme A by two successive hydroxylations of the methyl group at C8. The first hydroxylation forms heme I, the second hydroxylation results in an unstable dihydroxymethyl group, which spontaneously dehydrates, resulting in the formyl group of heme A. The sequence is that of Heme A synthase from Cereibacter sphaeroides (strain ATCC 17023 / DSM 158 / JCM 6121 / CCUG 31486 / LMG 2827 / NBRC 12203 / NCIMB 8253 / ATH 2.4.1.) (Rhodobacter sphaeroides).